The primary structure comprises 535 residues: Isoleucine N-monooxygenase 1 (535 aa).

Residues 1–8 (MGLMPDFL) are Cytoplasmic-facing. Residues 9-29 (SLCHEFPWTFLLVVIFSFMIF) traverse the membrane as a helical; Signal-anchor for type II membrane protein segment. At 30–535 (KVTKTHLVNK…AAELYRTNEI (506 aa)) the chain is on the lumenal side. N38, N232, and N404 each carry an N-linked (GlcNAc...) asparagine glycan. C470 lines the heme pocket.

It belongs to the cytochrome P450 family. It depends on heme as a cofactor. As to expression, exclusively expressed in aerial parts. Highest expression in the apical leaves. Also detected in the second leaf from the top and in the stem. Not expressed in older leaves or roots.

The protein resides in the microsome membrane. The enzyme catalyses L-isoleucine + 2 reduced [NADPH--hemoprotein reductase] + 2 O2 = (1E,2S)-2-methylbutanal oxime + 2 oxidized [NADPH--hemoprotein reductase] + CO2 + 3 H2O + 2 H(+). It catalyses the reaction L-isoleucine + reduced [NADPH--hemoprotein reductase] + O2 = N-hydroxy-L-isoleucine + oxidized [NADPH--hemoprotein reductase] + H2O + 2 H(+). It carries out the reaction N-hydroxy-L-isoleucine + reduced [NADPH--hemoprotein reductase] + O2 = N,N-dihydroxy-L-isoleucine + oxidized [NADPH--hemoprotein reductase] + H2O + H(+). The catalysed reaction is L-valine + 2 reduced [NADPH--hemoprotein reductase] + 2 O2 = (E)-2-methylpropanal oxime + 2 oxidized [NADPH--hemoprotein reductase] + CO2 + 3 H2O + 2 H(+). The enzyme catalyses L-valine + reduced [NADPH--hemoprotein reductase] + O2 = N-hydroxy-L-valine + oxidized [NADPH--hemoprotein reductase] + H2O + 2 H(+). It catalyses the reaction N-hydroxy-L-valine + reduced [NADPH--hemoprotein reductase] + O2 = N,N-dihydroxy-L-valine + oxidized [NADPH--hemoprotein reductase] + H2O + H(+). It participates in secondary metabolite biosynthesis. Functionally, involved in the biosynthesis of the cyanogenic glucosides linamarin and lotaustralin and of the nitirle glucosides rhodiocyanoside A and D. Can use L-isoleucine &gt; L-valine as substrate, but not L-leucine, L-phenylalanine or L-tyrosine. Catalyzes multi-step reactions starting with two successive N-hydroxylations using L-isoleucine and, to a lower extent, L-valine as substrates leading to the formation of N,N-dihydroxy-L-valine and N,N-dihydroxy-L-isoleucine, respectively; following spontaneous reactions lead to the production of (E)-2-methylpropanal oxime and (1E,2S)-2-methylbutanal oxime, respectively. The sequence is that of Isoleucine N-monooxygenase 1 from Lotus japonicus (Lotus corniculatus var. japonicus).